A 1388-amino-acid chain; its full sequence is DNA-directed RNA polymerase subunit beta (1388 aa).

This sequence belongs to the RNA polymerase beta chain family. The RNAP catalytic core consists of 2 alpha, 1 beta, 1 beta' and 1 omega subunit. When a sigma factor is associated with the core the holoenzyme is formed, which can initiate transcription.

It carries out the reaction RNA(n) + a ribonucleoside 5'-triphosphate = RNA(n+1) + diphosphate. Its function is as follows. DNA-dependent RNA polymerase catalyzes the transcription of DNA into RNA using the four ribonucleoside triphosphates as substrates. The polypeptide is DNA-directed RNA polymerase subunit beta (Xylella fastidiosa (strain Temecula1 / ATCC 700964)).